Reading from the N-terminus, the 662-residue chain is Sodium/glucose cotransporter 1 (662 aa).

Residues 1-24 lie on the Extracellular side of the membrane; the sequence is MDSSTLSPLTTSTAAPLESYERIR. A helical transmembrane segment spans residues 25-47; the sequence is NAADISVIVIYFLVVMAVGLWAM. Over 48-66 the chain is Cytoplasmic; sequence FSTNRGTVGGFFLAGRSMV. Residues 67 to 90 traverse the membrane as a helical segment; that stretch reads WWPIGASLFASNIGSGHFVGLAGT. Residues 91 to 95 lie on the Extracellular side of the membrane; the sequence is GAASG. The chain crosses the membrane as a helical span at residues 96 to 117; that stretch reads IATGGFEWNALIMVVVLGWVFV. The Cytoplasmic portion of the chain corresponds to 118–139; that stretch reads PIYIRAGVVTMPEYLQKRFGGK. A helical transmembrane segment spans residues 140–169; that stretch reads RIQIYLSILSLLLYIFTKISADIFSGAIFI. The Extracellular segment spans residues 170-176; it reads QLTLGLD. Residues 177–193 form a helical membrane-spanning segment; that stretch reads IYVAIIILLVITGLYTI. Topologically, residues 194–202 are cytoplasmic; that stretch reads TGGLAAVIY. Residues 203–221 traverse the membrane as a helical segment; it reads TDTLQTAIMMVGSVILTGF. Topologically, residues 222–275 are extracellular; that stretch reads AFHEVGGYEAFTEKYMRAIPSQISYGNTSIPQKCYTPREDAFHIFRDAITGDIP. The N-linked (GlcNAc...) asparagine glycan is linked to Asn248. Disulfide bonds link Cys255–Cys511, Cys255–Cys608, Cys345–Cys351, Cys355–Cys361, and Cys517–Cys522. Residues 276-295 form a helical membrane-spanning segment; that stretch reads WPGLVFGMSILTLWYWCTDQ. Over 296 to 309 the chain is Cytoplasmic; sequence VIVQRCLSAKNLSH. Residues 310-331 traverse the membrane as a helical segment; that stretch reads VKAGCILCGYLKVMPMFLIVMM. Residues 332–375 lie on the Extracellular side of the membrane; the sequence is GMVSRILYTDKVACVVPSECERYCGTRVGCTNIAFPTLVVELMP. A helical membrane pass occupies residues 376–406; that stretch reads NGLRGLMLSVMMASLMSSLTSIFNSASTLFT. Residues 407 to 422 are Cytoplasmic-facing; it reads MDIYTKIRKKASEKEL. Residues 423–444 traverse the membrane as a helical segment; sequence MIAGRLFMLFLIGISIAWVPIV. Topologically, residues 445-451 are extracellular; it reads QSAQSGQ. Residues 452–477 form a helical membrane-spanning segment; sequence LFDYIQSITSYLGPPIAAVFLLAIFW. D-glucose is bound at residue Gln457. At 478 to 481 the chain is on the cytoplasmic side; sequence KRVN. A helical membrane pass occupies residues 482–504; that stretch reads EPGAFWGLVLGFLIGISRMITEF. Topologically, residues 505–525 are extracellular; sequence AYGTGSCMEPSNCPTIICGVH. Residues 526–547 form a helical membrane-spanning segment; that stretch reads YLYFAIILFVISIITVVVVSLF. Over 548–642 the chain is Cytoplasmic; the sequence is TKPIPDVHLY…TSEHPLWRTV (95 aa). Residues 643 to 660 traverse the membrane as a helical segment; the sequence is VNINGVILLAVAVFCYAY. Residues 661-662 are Extracellular-facing; it reads FA.

The protein belongs to the sodium:solute symporter (SSF) (TC 2.A.21) family. In terms of processing, N-glycosylation is not necessary for the cotransporter function. In terms of tissue distribution, found predominantly in intestine, renal cortex and in outer renal medulla.

Its subcellular location is the apical cell membrane. The catalysed reaction is D-glucose(out) + 2 Na(+)(out) = D-glucose(in) + 2 Na(+)(in). The enzyme catalyses D-galactose(out) + 2 Na(+)(out) = D-galactose(in) + 2 Na(+)(in). Enhanced by the interaction with PDZK1IP1/MAP17; but unlike SLC5A2/SGLT2, PDZK1IP1 is not essential for SLC5A1 transporter activity. Possibly modulated by cholesterol binding. Electrogenic Na(+)-coupled sugar symporter that actively transports D-glucose or D-galactose at the plasma membrane, with a Na(+) to sugar coupling ratio of 2:1. Transporter activity is driven by a transmembrane Na(+) electrochemical gradient set by the Na(+)/K(+) pump. Has a primary role in the transport of dietary monosaccharides from enterocytes to blood. Responsible for the absorption of D-glucose or D-galactose across the apical brush-border membrane of enterocytes, whereas basolateral exit is provided by GLUT2. Additionally, functions as a D-glucose sensor in enteroendocrine cells, triggering the secretion of the incretins GCG and GIP that control food intake and energy homeostasis. Together with SGLT2, functions in reabsorption of D-glucose from glomerular filtrate, playing a nonredundant role in the S3 segment of the proximal tubules. Transports D-glucose into endometrial epithelial cells, controlling glycogen synthesis and nutritional support for the embryo as well as the decidual transformation of endometrium prior to conception. Acts as a water channel enabling passive water transport in response to the osmotic gradient created upon sugar and Na(+) uptake. Has high water conductivity comparable to aquaporins and therefore is expected to play an important role in transepithelial water permeability, especially in the small intestine. This chain is Sodium/glucose cotransporter 1 (SLC5A1), found in Oryctolagus cuniculus (Rabbit).